The sequence spans 408 residues: Beta-ureidopropionase (408 aa).

One can recognise a CN hydrolase domain in the interval 90-360; sequence VRVGLIQNSI…DGLLISDMDL (271 aa). The active-site Proton acceptor is E137. The active-site Proton donor is the K212. The Nucleophile role is filled by C249.

It belongs to the carbon-nitrogen hydrolase superfamily. BUP family. In terms of assembly, homodimer, homotetramer, homooctamer; can also form higher homooligomers.

The protein localises to the cytoplasm. It catalyses the reaction 3-(carbamoylamino)propanoate + H2O + 2 H(+) = beta-alanine + NH4(+) + CO2. It carries out the reaction 3-(carbamoylamino)-2-methylpropanoate + H2O + 2 H(+) = (R)-3-amino-2-methylpropanoate + NH4(+) + CO2. It functions in the pathway amino-acid biosynthesis; beta-alanine biosynthesis. Catalyzes a late step in pyrimidine degradation. Converts N-carbamoyl-beta-aminoisobutyrate and N-carbamoyl-beta-alanine (3-ureidopropanoate) to, respectively, beta-aminoisobutyrate and beta-alanine, ammonia and carbon dioxide. Involved in the recycling of nitrogen from nucleobases to general nitrogen metabolism. The polypeptide is Beta-ureidopropionase (Arabidopsis thaliana (Mouse-ear cress)).